The following is a 187-amino-acid chain: HTH-type transcriptional repressor Rv1474c (187 aa).

One can recognise an HTH tetR-type domain in the interval alanine 10 to methionine 70. Residues threonine 33 to phenylalanine 52 constitute a DNA-binding region (H-T-H motif).

Homodimer.

Its activity is regulated as follows. Binding to DNA is abolished in the presence of high concentration of iron. Specifically binds to tetracycline, which leads to a conformational change in the structure of the protein and inhibits the DNA binding activity. Its function is as follows. Represses the expression of the aconitase gene acn and its own expression, in an iron-responsive manner. Binds to the inverted repeat element present in the upstream region of acn (Rv1475c)-Rv1474c operon. Preferentially binds to major groove of the DNA. The protein is HTH-type transcriptional repressor Rv1474c of Mycobacterium tuberculosis (strain ATCC 25618 / H37Rv).